We begin with the raw amino-acid sequence, 534 residues long: Protein tweety homolog 2 (534 aa).

Over 1-44 (MAAARVEYIAPWWVYWLHNFPHVDLSLRQKSPDFNPKDPGYQQT) the chain is Extracellular. Residues 45-65 (LLFVALIVALCAAVNLLFVSV) traverse the membrane as a helical segment. Topologically, residues 66 to 87 (YLICLCCCKKEDETETKKTSSC) are cytoplasmic. A helical membrane pass occupies residues 88-108 (CVTWTAAVSGLLCCAAVGIGF). Topologically, residues 109–213 (YGNSETNDGV…QTSTIEYYRW (105 aa)) are extracellular. Residues Glu-113 and Asp-116 each contribute to the Ca(2+) site. Asn-129 carries N-linked (GlcNAc...) asparagine glycosylation. Positions 164–166 (RGD) match the RGD motif. Residue Asn-197 is glycosylated (N-linked (GlcNAc...) asparagine). The chain crosses the membrane as a helical span at residues 214–234 (LSYLLLFISYVVICLVTCVGL). At 235–240 (AKKSKC) the chain is on the cytoplasmic side. Residues 241 to 261 (LLLIMLCFGLIALMLSWTSLA) traverse the membrane as a helical segment. The Extracellular segment spans residues 262–388 (LETSSAMGTS…IGICYDGVEG (127 aa)). Disulfide bonds link Cys-274–Cys-382 and Cys-300–Cys-367. Residues Asn-283 and Asn-352 are each glycosylated (N-linked (GlcNAc...) asparagine). A helical membrane pass occupies residues 389 to 409 (MLYLGLFSLLAALAFTAMVCA). The Cytoplasmic portion of the chain corresponds to 410-534 (MPQAWKHLEA…SSIYSNVFPA (125 aa)).

It belongs to the tweety family. In terms of assembly, forms cis-homodimers in the presence of Ca(+2) and forms monomers and trans-dimers in the absence of Ca(2+).

It localises to the cell membrane. The enzyme catalyses chloride(in) = chloride(out). It catalyses the reaction L-glutamate(out) = L-glutamate(in). Functionally, may act as a calcium-independent, swelling-dependent volume-regulated anion channel (VRAC-swell) which plays a pivotal role in the process of regulatory volume decrease (RVD) in the brain through the efflux of anions like chloride and organic osmolytes like glutamate. Probable large-conductance Ca(2+)-activated chloride channel. This Xenopus tropicalis (Western clawed frog) protein is Protein tweety homolog 2 (ttyh2).